The primary structure comprises 485 residues: D-alanine--D-alanyl carrier protein ligase (485 aa).

144 to 145 (TS) contributes to the ATP binding site. Aspartate 189 provides a ligand contact to D-alanine. 284-289 (NTYGPT) lines the ATP pocket. Valine 293 contacts D-alanine. Aspartate 365 and lysine 473 together coordinate ATP. D-alanine is bound at residue lysine 473.

Belongs to the ATP-dependent AMP-binding enzyme family. DltA subfamily.

The protein localises to the cytoplasm. The enzyme catalyses holo-[D-alanyl-carrier protein] + D-alanine + ATP = D-alanyl-[D-alanyl-carrier protein] + AMP + diphosphate. Its pathway is cell wall biogenesis; lipoteichoic acid biosynthesis. Functionally, catalyzes the first step in the D-alanylation of lipoteichoic acid (LTA), the activation of D-alanine and its transfer onto the D-alanyl carrier protein (Dcp) DltC. In an ATP-dependent two-step reaction, forms a high energy D-alanyl-AMP intermediate, followed by transfer of the D-alanyl residue as a thiol ester to the phosphopantheinyl prosthetic group of the Dcp. D-alanylation of LTA plays an important role in modulating the properties of the cell wall in Gram-positive bacteria, influencing the net charge of the cell wall. The polypeptide is D-alanine--D-alanyl carrier protein ligase (Staphylococcus epidermidis (strain ATCC 35984 / DSM 28319 / BCRC 17069 / CCUG 31568 / BM 3577 / RP62A)).